The following is a 231-amino-acid chain: Orotate phosphoribosyltransferase (231 aa).

5-phospho-alpha-D-ribose 1-diphosphate contacts are provided by residues K27, 79–80 (YK), R106, K107, K110, H112, and 133–141 (DDVMTAGTA). 2 residues coordinate orotate: T137 and R166.

Belongs to the purine/pyrimidine phosphoribosyltransferase family. PyrE subfamily. In terms of assembly, homodimer. Mg(2+) serves as cofactor.

The enzyme catalyses orotidine 5'-phosphate + diphosphate = orotate + 5-phospho-alpha-D-ribose 1-diphosphate. It participates in pyrimidine metabolism; UMP biosynthesis via de novo pathway; UMP from orotate: step 1/2. In terms of biological role, catalyzes the transfer of a ribosyl phosphate group from 5-phosphoribose 1-diphosphate to orotate, leading to the formation of orotidine monophosphate (OMP). The polypeptide is Orotate phosphoribosyltransferase (Bifidobacterium longum (strain NCC 2705)).